The following is a 152-amino-acid chain: Putative pseudoazurin (152 aa).

The N-terminal stretch at 1 to 23 (MPLKFGLIVATAALIASAASLMA) is a signal peptide. One can recognise a Plastocyanin-like domain in the interval 28–116 (VQMLNKGTDG…MGMVALIQVG (89 aa)). Histidine 63, cysteine 101, histidine 104, and methionine 109 together coordinate Cu cation.

It depends on Cu cation as a cofactor.

It localises to the periplasm. This soluble electron transfer copper protein is required for the inactivation of copper-containing nitrite reductase in the presence of oxygen. The chain is Putative pseudoazurin (azu) from Rhizobium leguminosarum bv. viciae.